The chain runs to 130 residues: Ribonuclease P protein component (130 aa).

This sequence belongs to the RnpA family. In terms of assembly, consists of a catalytic RNA component (M1 or rnpB) and a protein subunit.

It catalyses the reaction Endonucleolytic cleavage of RNA, removing 5'-extranucleotides from tRNA precursor.. RNaseP catalyzes the removal of the 5'-leader sequence from pre-tRNA to produce the mature 5'-terminus. It can also cleave other RNA substrates such as 4.5S RNA. The protein component plays an auxiliary but essential role in vivo by binding to the 5'-leader sequence and broadening the substrate specificity of the ribozyme. The protein is Ribonuclease P protein component of Desulfovibrio desulfuricans (strain ATCC 27774 / DSM 6949 / MB).